The sequence spans 206 residues: Large ribosomal subunit protein uL4 (206 aa).

A disordered region spans residues 47–77 (GTQSTKTRSEVRGGGIKPWRQKGTGRARQGS).

The protein belongs to the universal ribosomal protein uL4 family. As to quaternary structure, part of the 50S ribosomal subunit.

Its function is as follows. One of the primary rRNA binding proteins, this protein initially binds near the 5'-end of the 23S rRNA. It is important during the early stages of 50S assembly. It makes multiple contacts with different domains of the 23S rRNA in the assembled 50S subunit and ribosome. Functionally, forms part of the polypeptide exit tunnel. This chain is Large ribosomal subunit protein uL4, found in Clostridium beijerinckii (strain ATCC 51743 / NCIMB 8052) (Clostridium acetobutylicum).